Reading from the N-terminus, the 678-residue chain is Exoribonuclease 2 (678 aa).

The region spanning 193 to 521 (REDLTALPFV…INHRLLKAHI (329 aa)) is the RNB domain. The region spanning 568–650 (ETRFQAEIFD…ENRSLVGKPT (83 aa)) is the S1 motif domain. The tract at residues 658–678 (SETQTSTEQPAEGAENNEPQA) is disordered.

It belongs to the RNR ribonuclease family. RNase II subfamily.

The protein resides in the cytoplasm. The enzyme catalyses Exonucleolytic cleavage in the 3'- to 5'-direction to yield nucleoside 5'-phosphates.. Its function is as follows. Involved in mRNA degradation. Hydrolyzes single-stranded polyribonucleotides processively in the 3' to 5' direction. The sequence is that of Exoribonuclease 2 from Vibrio cholerae serotype O1 (strain ATCC 39541 / Classical Ogawa 395 / O395).